The primary structure comprises 489 residues: Protein K15 (489 aa).

Residues 1–26 (MKTLIFFWNLWLWALLVCFWCITLVC) form the signal peptide. Helical transmembrane passes span 29–49 (TNSI…VSAI), 63–83 (WPSS…WNLS), 89–109 (TYAC…LTLI), 121–141 (HGIL…VHMS), 148–168 (WIFF…FATV), 175–195 (LVSS…VSCC), 200–220 (CTAT…TGII), 237–257 (FLLL…LLAI), 264–284 (IKGH…LYVW), 296–316 (MLHL…VMLL), and 324–344 (ILTM…LLVF).

As to quaternary structure, interacts with host LYN; this interaction modulates B-cells signaling. Interacts with host ITSN2.

Its subcellular location is the host cell membrane. The protein localises to the host Golgi apparatus. It is found in the host trans-Golgi network. Functionally, plays a crucial role for reactivation of the virus from latency, early viral gene expression and virus production. Modulates host signaling pathways including activation of MAP kinases c-JUN-N-terminal kinase (JNK), ERK2, and NF-kappa-B resulting in the activation of AP-1 and NFAT-dependent gene expression in B-lymphocytes. When expressed in epithelial cells, induces the expression of several inflammatory and angiogenic genes. Also interferes with B-lymphocytes signaling through interaction with host LYN kinase. In Human herpesvirus 8 type P (isolate GK18) (HHV-8), this protein is Protein K15 (K15).